Reading from the N-terminus, the 372-residue chain is Glutamine synthetase (372 aa).

The GS beta-grasp domain occupies 24-103 (VIAEYVWVDG…VLAECFNSDG (80 aa)). Residues 110 to 372 (HRHEANKLFQ…KEYERETNEQ (263 aa)) enclose the GS catalytic domain.

The protein belongs to the glutamine synthetase family. Homooctamer.

It is found in the cytoplasm. It carries out the reaction L-glutamate + NH4(+) + ATP = L-glutamine + ADP + phosphate + H(+). In Candida glabrata (strain ATCC 2001 / BCRC 20586 / JCM 3761 / NBRC 0622 / NRRL Y-65 / CBS 138) (Yeast), this protein is Glutamine synthetase (GLN1).